Reading from the N-terminus, the 521-residue chain is 2,3-bisphosphoglycerate-independent phosphoglycerate mutase 2 (521 aa).

The Mn(2+) site is built by Asp20 and Ser70. The active-site Phosphoserine intermediate is the Ser70. Residues His131, 161 to 162 (RD), Arg193, Arg199, 270 to 273 (RPDR), and Lys343 contribute to the substrate site. Positions 410, 414, 451, 452, and 470 each coordinate Mn(2+).

The protein belongs to the BPG-independent phosphoglycerate mutase family. It depends on Mn(2+) as a cofactor.

The catalysed reaction is (2R)-2-phosphoglycerate = (2R)-3-phosphoglycerate. It functions in the pathway carbohydrate degradation; glycolysis; pyruvate from D-glyceraldehyde 3-phosphate: step 3/5. Its function is as follows. Catalyzes the interconversion of 2-phosphoglycerate and 3-phosphoglycerate. The chain is 2,3-bisphosphoglycerate-independent phosphoglycerate mutase 2 from Methanosarcina acetivorans (strain ATCC 35395 / DSM 2834 / JCM 12185 / C2A).